The sequence spans 80 residues: Conotoxin Cl9.5 (80 aa).

The first 23 residues, 1–23 (MNCYLILTVALLLTSAMTGTTTA), serve as a signal peptide directing secretion. Positions 24 to 37 (GQLNTKGVTLREDD) are excised as a propeptide. 3 disulfide bridges follow: Cys-42-Cys-59, Cys-47-Cys-69, and Cys-49-Cys-74.

Expressed by the venom duct.

The protein localises to the secreted. In Californiconus californicus (California cone), this protein is Conotoxin Cl9.5.